We begin with the raw amino-acid sequence, 1184 residues long: DNA polymerase III subunit alpha (1184 aa).

This sequence belongs to the DNA polymerase type-C family. DnaE subfamily. The Pol III holoenzyme complex contains at least 10 different subunits organized into 3 functionally essential subassemblies: the Pol III core, the beta sliding clamp processivity factor and the clamp-loading complex. The Pol III core (subunits alpha, epsilon and theta) contains the polymerase and the 3'-5' exonuclease proofreading activities. The polymerase is tethered to the template via the dimeric beta sliding clamp processivity factor. The clamp loader (also called gamma complex) assembles the beta sliding clamp onto the primed template and plays a central role in the organization and communication at the replication fork. The clamp-loading complex contains delta, delta', psi and chi, and 3 copies of either or both of two different DnaX proteins, gamma and tau. The DNA replisome complex has a single clamp loader (3 tau and 1 each of delta, delta', psi and chi subunits) which binds 3 Pol III cores (1 core on the leading strand and 2 on the lagging strand) each with a beta sliding clamp dimer. Interacts with the beta-sliding clamp (DnaN). Co-immunoprecipitates with DarG in the presence and absence of darT.

The protein localises to the cytoplasm. It carries out the reaction DNA(n) + a 2'-deoxyribonucleoside 5'-triphosphate = DNA(n+1) + diphosphate. Its function is as follows. DNA polymerase III is a complex, multichain enzyme responsible for most of the replicative synthesis in bacteria. Pol III also exhibits 3' to 5' exonuclease activity. The alpha chain is the DNA polymerase. In Mycobacterium tuberculosis (strain ATCC 25618 / H37Rv), this protein is DNA polymerase III subunit alpha (dnaE1).